A 318-amino-acid polypeptide reads, in one-letter code: NADH-ubiquinone oxidoreductase chain 1 (318 aa).

8 helical membrane-spanning segments follow: residues 3-23, 69-89, 102-122, 146-166, 171-191, 222-242, 253-273, and 294-314; these read FMNL…LTLL, VLFI…WIPL, ILFM…SGWA, LAII…STLI, HIWL…STLA, LFFL…IILF, ELYT…FLWV, and LPLT…LAGI.

The protein belongs to the complex I subunit 1 family. In terms of assembly, core subunit of respiratory chain NADH dehydrogenase (Complex I) which is composed of 45 different subunits.

The protein localises to the mitochondrion inner membrane. It carries out the reaction a ubiquinone + NADH + 5 H(+)(in) = a ubiquinol + NAD(+) + 4 H(+)(out). Core subunit of the mitochondrial membrane respiratory chain NADH dehydrogenase (Complex I) which catalyzes electron transfer from NADH through the respiratory chain, using ubiquinone as an electron acceptor. Essential for the catalytic activity and assembly of complex I. The sequence is that of NADH-ubiquinone oxidoreductase chain 1 (MT-ND1) from Cnephaeus nilssonii (Northern bat).